A 444-amino-acid chain; its full sequence is Probable kynurenine--oxoglutarate transaminase BNA3 (444 aa).

Lysine 271 carries the N6-(pyridoxal phosphate)lysine modification.

It belongs to the class-I pyridoxal-phosphate-dependent aminotransferase family. Homodimer. The cofactor is pyridoxal 5'-phosphate.

It localises to the cytoplasm. Its subcellular location is the mitochondrion. The enzyme catalyses L-kynurenine + 2-oxoglutarate = kynurenate + L-glutamate + H2O. Its pathway is amino-acid degradation; L-kynurenine degradation; kynurenate from L-kynurenine: step 1/2. In terms of biological role, catalyzes the irreversible transamination of the L-tryptophan metabolite L-kynurenine to form kynurenic acid (KA). This is Probable kynurenine--oxoglutarate transaminase BNA3 (BNA3) from Saccharomyces cerevisiae (strain ATCC 204508 / S288c) (Baker's yeast).